The primary structure comprises 349 residues: GTP 3',8-cyclase (349 aa).

Positions 24–249 (PFGRAVTYLR…KDMSYRTGGP (226 aa)) constitute a Radical SAM core domain. Residue Arg-33 participates in GTP binding. Residues Cys-40 and Cys-44 each contribute to the [4Fe-4S] cluster site. Tyr-46 lines the S-adenosyl-L-methionine pocket. Residue Cys-47 participates in [4Fe-4S] cluster binding. Arg-82 lines the GTP pocket. Residue Gly-86 participates in S-adenosyl-L-methionine binding. Thr-116 provides a ligand contact to GTP. Position 140 (Ser-140) interacts with S-adenosyl-L-methionine. Residue Lys-176 coordinates GTP. Met-210 is a binding site for S-adenosyl-L-methionine. [4Fe-4S] cluster-binding residues include Cys-273 and Cys-276. 278-280 (RVR) contacts GTP. [4Fe-4S] cluster is bound at residue Cys-290.

Belongs to the radical SAM superfamily. MoaA family. In terms of assembly, monomer and homodimer. [4Fe-4S] cluster is required as a cofactor.

The enzyme catalyses GTP + AH2 + S-adenosyl-L-methionine = (8S)-3',8-cyclo-7,8-dihydroguanosine 5'-triphosphate + 5'-deoxyadenosine + L-methionine + A + H(+). It functions in the pathway cofactor biosynthesis; molybdopterin biosynthesis. Its function is as follows. Catalyzes the cyclization of GTP to (8S)-3',8-cyclo-7,8-dihydroguanosine 5'-triphosphate. This chain is GTP 3',8-cyclase, found in Sinorhizobium medicae (strain WSM419) (Ensifer medicae).